A 172-amino-acid polypeptide reads, in one-letter code: Large ribosomal subunit protein uL10 (172 aa).

It belongs to the universal ribosomal protein uL10 family. Part of the ribosomal stalk of the 50S ribosomal subunit. The N-terminus interacts with L11 and the large rRNA to form the base of the stalk. The C-terminus forms an elongated spine to which L12 dimers bind in a sequential fashion forming a multimeric L10(L12)X complex.

Its function is as follows. Forms part of the ribosomal stalk, playing a central role in the interaction of the ribosome with GTP-bound translation factors. The sequence is that of Large ribosomal subunit protein uL10 from Bartonella tribocorum (strain CIP 105476 / IBS 506).